The chain runs to 246 residues: UDP-N-acetyl-D-mannosaminuronic acid transferase (246 aa).

This sequence belongs to the glycosyltransferase 26 family.

The catalysed reaction is UDP-N-acetyl-alpha-D-mannosaminouronate + N-acetyl-alpha-D-glucosaminyl-di-trans,octa-cis-undecaprenyl diphosphate = beta-D-ManNAcA-(1-&gt;4)-alpha-D-GlcNAc-di-trans,octa-cis-undecaprenyl diphosphate + UDP + H(+). It participates in bacterial outer membrane biogenesis; enterobacterial common antigen biosynthesis. Its function is as follows. Catalyzes the synthesis of Und-PP-GlcNAc-ManNAcA (Lipid II), the second lipid-linked intermediate involved in enterobacterial common antigen (ECA) synthesis. The protein is UDP-N-acetyl-D-mannosaminuronic acid transferase of Salmonella arizonae (strain ATCC BAA-731 / CDC346-86 / RSK2980).